The sequence spans 282 residues: Aldo-keto reductase ML1669 (282 aa).

Catalysis depends on Y57, which acts as the Proton donor. Residues L197, V235, R237, S238, A239, S246, N247, and R273 each contribute to the NADPH site.

This sequence belongs to the aldo/keto reductase family.

The protein is Aldo-keto reductase ML1669 of Mycobacterium leprae (strain TN).